The primary structure comprises 210 residues: Thiamine-phosphate synthase (210 aa).

4-amino-2-methyl-5-(diphosphooxymethyl)pyrimidine contacts are provided by residues 34–38 (QLRHK) and Asn-66. The Mg(2+) site is built by Asp-67 and Asp-86. Position 105 (Ser-105) interacts with 4-amino-2-methyl-5-(diphosphooxymethyl)pyrimidine. A 2-[(2R,5Z)-2-carboxy-4-methylthiazol-5(2H)-ylidene]ethyl phosphate-binding site is contributed by 131 to 133 (TSS). Position 134 (Lys-134) interacts with 4-amino-2-methyl-5-(diphosphooxymethyl)pyrimidine. Gly-162 contributes to the 2-[(2R,5Z)-2-carboxy-4-methylthiazol-5(2H)-ylidene]ethyl phosphate binding site.

The protein belongs to the thiamine-phosphate synthase family. Mg(2+) serves as cofactor.

The enzyme catalyses 2-[(2R,5Z)-2-carboxy-4-methylthiazol-5(2H)-ylidene]ethyl phosphate + 4-amino-2-methyl-5-(diphosphooxymethyl)pyrimidine + 2 H(+) = thiamine phosphate + CO2 + diphosphate. It carries out the reaction 2-(2-carboxy-4-methylthiazol-5-yl)ethyl phosphate + 4-amino-2-methyl-5-(diphosphooxymethyl)pyrimidine + 2 H(+) = thiamine phosphate + CO2 + diphosphate. The catalysed reaction is 4-methyl-5-(2-phosphooxyethyl)-thiazole + 4-amino-2-methyl-5-(diphosphooxymethyl)pyrimidine + H(+) = thiamine phosphate + diphosphate. It participates in cofactor biosynthesis; thiamine diphosphate biosynthesis; thiamine phosphate from 4-amino-2-methyl-5-diphosphomethylpyrimidine and 4-methyl-5-(2-phosphoethyl)-thiazole: step 1/1. In terms of biological role, condenses 4-methyl-5-(beta-hydroxyethyl)thiazole monophosphate (THZ-P) and 2-methyl-4-amino-5-hydroxymethyl pyrimidine pyrophosphate (HMP-PP) to form thiamine monophosphate (TMP). The sequence is that of Thiamine-phosphate synthase from Chlorobium limicola (strain DSM 245 / NBRC 103803 / 6330).